A 535-amino-acid polypeptide reads, in one-letter code: Sterol 26-hydroxylase, mitochondrial (535 aa).

A mitochondrion-targeting transit peptide spans 1 to 36 (MAALGCARLRWALLGPRVAGCGLCPQGARAKAAIPT). Residue Lys286 is modified to N6-acetyllysine. The segment at 387–401 (PLLKAVLKETLRLYP) is sterol-binding. Cys480 contacts heme. Lys524 carries the post-translational modification N6-acetyllysine.

It belongs to the cytochrome P450 family. In terms of assembly, interacts with HSP70; this interaction is required for initial targeting to mitochondria. It depends on heme as a cofactor. In terms of tissue distribution, expressed in all tissues tested. Highest expression in liver and duodenum, followed by adrenal gland and lung. Low expression in kidney and spleen.

It localises to the mitochondrion inner membrane. The enzyme catalyses 5beta-cholestane-3alpha,7alpha,12alpha-triol + 6 reduced [adrenodoxin] + 3 O2 + 5 H(+) = (25R)-3alpha,7alpha,12alpha-trihydroxy-5beta-cholestan-26-oate + 6 oxidized [adrenodoxin] + 4 H2O. The catalysed reaction is cholestanol + 2 reduced [adrenodoxin] + O2 + 2 H(+) = (25R)-26-hydroxycholestanol + 2 oxidized [adrenodoxin] + H2O. It carries out the reaction (25R)-3beta-hydroxycholest-5-en-7-one-26-al + 2 reduced [adrenodoxin] + O2 + H(+) = (25R)-3beta-hydroxycholest-5-en-7-one-26-oate + 2 oxidized [adrenodoxin] + H2O. It catalyses the reaction (25R)-3beta,26-dihydroxycholest-5-en-7-one + 2 reduced [adrenodoxin] + O2 + 2 H(+) = (25R)-3beta-hydroxycholest-5-en-7-one-26-al + 2 oxidized [adrenodoxin] + 2 H2O. The enzyme catalyses 7-oxocholesterol + 2 reduced [adrenodoxin] + O2 + 2 H(+) = (25R)-3beta,26-dihydroxycholest-5-en-7-one + 2 oxidized [adrenodoxin] + H2O. The catalysed reaction is calciol + 2 reduced [adrenodoxin] + O2 + 2 H(+) = calcidiol + 2 oxidized [adrenodoxin] + H2O. It carries out the reaction (25R)-5beta-cholestane-3alpha,7alpha,12alpha,26-tetrol + 2 reduced [adrenodoxin] + O2 + 2 H(+) = (25R)-3alpha,7alpha,12alpha-trihydroxy-5beta-cholestan-26-al + 2 oxidized [adrenodoxin] + 2 H2O. It catalyses the reaction 2 reduced [adrenodoxin] + cholesterol + O2 + 2 H(+) = (25R)-cholest-5-ene-3beta,26-diol + 2 oxidized [adrenodoxin] + H2O. The enzyme catalyses (25R)-3beta,4beta-dihydroxycholest-5-en-26-al + 2 reduced [adrenodoxin] + O2 + H(+) = (25R)-3beta,4beta-dihydroxycholest-5-en-26-oate + 2 oxidized [adrenodoxin] + H2O. The catalysed reaction is (25R)-4beta,26-dihydroxycholesterol + 2 reduced [adrenodoxin] + O2 + 2 H(+) = (25R)-3beta,4beta-dihydroxycholest-5-en-26-al + 2 oxidized [adrenodoxin] + 2 H2O. It carries out the reaction 4beta-hydroxycholesterol + 2 reduced [adrenodoxin] + O2 + 2 H(+) = (25R)-4beta,26-dihydroxycholesterol + 2 oxidized [adrenodoxin] + H2O. It catalyses the reaction (25R)-3beta-hydroxy-5-cholesten-26-al + 2 reduced [adrenodoxin] + O2 + H(+) = (25R)-3beta-hydroxy-5-cholestenoate + 2 oxidized [adrenodoxin] + H2O. The enzyme catalyses (25R)-cholest-5-ene-3beta,26-diol + 2 reduced [adrenodoxin] + O2 + 2 H(+) = (25R)-3beta-hydroxy-5-cholesten-26-al + 2 oxidized [adrenodoxin] + 2 H2O. The catalysed reaction is (25R)-3alpha,7alpha,12alpha-trihydroxy-5beta-cholestan-26-al + 2 reduced [adrenodoxin] + O2 + H(+) = (25R)-3alpha,7alpha,12alpha-trihydroxy-5beta-cholestan-26-oate + 2 oxidized [adrenodoxin] + H2O. It carries out the reaction 5beta-cholestane-3alpha,7alpha,12alpha-triol + 2 reduced [adrenodoxin] + O2 + 2 H(+) = (25R)-5beta-cholestane-3alpha,7alpha,12alpha,26-tetrol + 2 oxidized [adrenodoxin] + H2O. Its pathway is hormone biosynthesis; cholecalciferol biosynthesis. It functions in the pathway steroid metabolism; cholesterol degradation. It participates in lipid metabolism; bile acid biosynthesis. Its function is as follows. Cytochrome P450 monooxygenase that catalyzes regio- and stereospecific hydroxylation of cholesterol and its derivatives. Hydroxylates (with R stereochemistry) the terminal methyl group of cholesterol side-chain in a three step reaction to yield at first a C26 alcohol, then a C26 aldehyde and finally a C26 acid. Regulates cholesterol homeostasis by catalyzing the conversion of excess cholesterol to bile acids via both the 'neutral' (classic) and the 'acid' (alternative) pathways. May also regulate cholesterol homeostasis via generation of active oxysterols, which act as ligands for NR1H2 and NR1H3 nuclear receptors, modulating the transcription of genes involved in lipid metabolism. Plays a role in cholestanol metabolism in the cerebellum. Similarly to cholesterol, hydroxylates cholestanol and may facilitate sterol diffusion through the blood-brain barrier to the systemic circulation for further degradation. Also hydroxylates retinal 7-ketocholesterol, a noxious oxysterol with pro-inflammatory and pro-apoptotic effects, and may play a role in its elimination from the retinal pigment epithelium. May play a redundant role in vitamin D biosynthesis. Catalyzes 25-hydroxylation of vitamin D3 that is required for its conversion to a functionally active form. The sequence is that of Sterol 26-hydroxylase, mitochondrial (CYP27A1) from Oryctolagus cuniculus (Rabbit).